Here is a 478-residue protein sequence, read N- to C-terminus: WD repeat-containing protein AAC3 (478 aa).

Disordered regions lie at residues 33–53 (HPLF…QQQQ) and 106–140 (SQIH…QYTN). Residues 106-125 (SQIHQQSQQSQLSNNLNSNS) are compositionally biased toward low complexity. The span at 126 to 140 (KESTNIPKTNTQYTN) shows a compositional bias: polar residues. WD repeat units lie at residues 163–202 (GNKK…NSNN), 226–268 (GHDG…GTVS), 270–307 (NSEN…TLKI), 310–349 (FNGE…TTHV), 357–396 (GHTA…CVKT), 399–438 (KSTF…PIHT), and 440–478 (ECSG…GYHS).

It belongs to the THOC3 family.

This chain is WD repeat-containing protein AAC3 (AAC3), found in Dictyostelium discoideum (Social amoeba).